A 444-amino-acid chain; its full sequence is Methylenetetrahydrofolate--tRNA-(uracil-5-)-methyltransferase TrmFO (444 aa).

Residue 10 to 15 (GAGLAG) participates in FAD binding.

This sequence belongs to the MnmG family. TrmFO subfamily. FAD serves as cofactor.

Its subcellular location is the cytoplasm. The catalysed reaction is uridine(54) in tRNA + (6R)-5,10-methylene-5,6,7,8-tetrahydrofolate + NADH + H(+) = 5-methyluridine(54) in tRNA + (6S)-5,6,7,8-tetrahydrofolate + NAD(+). The enzyme catalyses uridine(54) in tRNA + (6R)-5,10-methylene-5,6,7,8-tetrahydrofolate + NADPH + H(+) = 5-methyluridine(54) in tRNA + (6S)-5,6,7,8-tetrahydrofolate + NADP(+). Its function is as follows. Catalyzes the folate-dependent formation of 5-methyl-uridine at position 54 (M-5-U54) in all tRNAs. The protein is Methylenetetrahydrofolate--tRNA-(uracil-5-)-methyltransferase TrmFO of Streptococcus sanguinis (strain SK36).